The chain runs to 360 residues: Dihydroorotate dehydrogenase (quinone) (360 aa).

Residues 67 to 71 (AGLDK) and Thr91 contribute to the FMN site. Lys71 contributes to the substrate binding site. Position 116-120 (116-120 (NRMGF)) interacts with substrate. FMN is bound by residues Asn145 and Asn176. A substrate-binding site is contributed by Asn176. Ser179 (nucleophile) is an active-site residue. Position 181 (Asn181) interacts with substrate. Residues Lys222 and Ser250 each coordinate FMN. 251–252 (NT) provides a ligand contact to substrate. Residues Gly272, Gly301, and 322–323 (YS) contribute to the FMN site.

The protein belongs to the dihydroorotate dehydrogenase family. Type 2 subfamily. As to quaternary structure, monomer. Requires FMN as cofactor.

It localises to the cell membrane. It catalyses the reaction (S)-dihydroorotate + a quinone = orotate + a quinol. Its pathway is pyrimidine metabolism; UMP biosynthesis via de novo pathway; orotate from (S)-dihydroorotate (quinone route): step 1/1. In terms of biological role, catalyzes the conversion of dihydroorotate to orotate with quinone as electron acceptor. In Deinococcus deserti (strain DSM 17065 / CIP 109153 / LMG 22923 / VCD115), this protein is Dihydroorotate dehydrogenase (quinone).